A 775-amino-acid polypeptide reads, in one-letter code: 5-methyltetrahydropteroyltriglutamate--homocysteine methyltransferase (775 aa).

5-methyltetrahydropteroyltri-L-glutamate contacts are provided by residues Arg16 to Lys19 and Lys115. L-homocysteine contacts are provided by residues Ile435–Ser437 and Glu488. L-methionine contacts are provided by residues Ile435–Ser437 and Glu488. Residues Arg519–Cys520 and Trp565 contribute to the 5-methyltetrahydropteroyltri-L-glutamate site. Asp603 serves as a coordination point for L-homocysteine. Asp603 contacts L-methionine. Glu609 serves as a coordination point for 5-methyltetrahydropteroyltri-L-glutamate. Residues His645, Cys647, and Glu669 each contribute to the Zn(2+) site. Residue His698 is the Proton donor of the active site. Zn(2+) is bound at residue Cys730.

It belongs to the vitamin-B12 independent methionine synthase family. The cofactor is Zn(2+).

The enzyme catalyses 5-methyltetrahydropteroyltri-L-glutamate + L-homocysteine = tetrahydropteroyltri-L-glutamate + L-methionine. It functions in the pathway amino-acid biosynthesis; L-methionine biosynthesis via de novo pathway; L-methionine from L-homocysteine (MetE route): step 1/1. Catalyzes the transfer of a methyl group from 5-methyltetrahydrofolate to homocysteine resulting in methionine formation. In Coxiella burnetii (strain CbuG_Q212) (Coxiella burnetii (strain Q212)), this protein is 5-methyltetrahydropteroyltriglutamate--homocysteine methyltransferase.